A 416-amino-acid chain; its full sequence is Ribosome biogenesis protein WDR12 homolog (416 aa).

Residues 7–89 (VQVRFFTKQK…ESVVEIEYLE (83 aa)) form a ubiquitin-like (UBL) domain region. 7 WD repeats span residues 101-138 (VHDD…LAKV), 140-184 (GHTS…ASCV), 189-228 (GHTQ…EGGD), 259-297 (GHTQ…NKQT), 299-338 (TGSK…GQVV), 344-384 (SHQG…TPLY), and 388-416 (GHQD…LILY). Residues 226–245 (GGDEGENGSLSKKQKTTGVK) form a disordered region.

It belongs to the WD repeat WDR12/YTM1 family.

The protein localises to the nucleus. Its subcellular location is the nucleolus. It is found in the nucleoplasm. Its function is as follows. Required for maturation of ribosomal RNAs and formation of the large ribosomal subunit. This chain is Ribosome biogenesis protein WDR12 homolog, found in Nematostella vectensis (Starlet sea anemone).